A 458-amino-acid polypeptide reads, in one-letter code: Protein adenylyltransferase FICD (458 aa).

Residues 1 to 23 (MILMPMASVVAVAEPKWVSVWGR) lie on the Cytoplasmic side of the membrane. Residues 24-44 (FLWMALLSMALGSLLALLLPL) form a helical; Signal-anchor for type II membrane protein membrane-spanning segment. Residues 45 to 458 (GVVEEHCLAV…GFKETLPVRP (414 aa)) are Lumenal-facing. O-AMP-threonine; by autocatalysis is present on T80. TPR repeat units follow at residues 106–139 (AKAALNQALEMKRQGKRGKAHKLFLHALKMDPGF) and 140–173 (VDALNEFGIFSEEDKDIIQADYLYTRALTISPFH). T183 bears the O-AMP-threonine; by autocatalysis mark. The short motif at 230-235 (TVAIEG) is the Inhibitory (S/T)XXXE(G/N) motif element. An ATP-binding site is contributed by E234. An N-linked (GlcNAc...) asparagine glycan is attached at N275. Residues 285-420 (VTMDDMLEIH…VRPFIRFIAK (136 aa)) enclose the Fido domain. Residue 316–319 (VGHH) participates in ATP binding. H363 is a catalytic residue. Residues 367-374 (DGNGRTSR), 399-400 (YY), and N407 each bind ATP.

It belongs to the fic family. As to quaternary structure, homodimer. Interacts with HD. Mg(2+) serves as cofactor. The cofactor is Mn(2+). Post-translationally, auto-AMPylated in vitro.

It localises to the endoplasmic reticulum membrane. It catalyses the reaction L-tyrosyl-[protein] + ATP = O-(5'-adenylyl)-L-tyrosyl-[protein] + diphosphate. The enzyme catalyses 3-O-(5'-adenylyl)-L-threonyl-[protein] + H2O = L-threonyl-[protein] + AMP + H(+). The catalysed reaction is L-threonyl-[protein] + ATP = 3-O-(5'-adenylyl)-L-threonyl-[protein] + diphosphate. The side chain of Glu-234 determines which of the two opposing activities (AMPylase or de-AMPylase) will take place. In response to endoplasmic reticulum stress, mediates de-AMPylase activity. Adenylyltransferase activity is inhibited by the inhibitory helix present at the N-terminus: Glu-234 binds ATP and competes with ATP-binding at Arg-374, thereby preventing adenylyltransferase activity. In unstressed cells, disengagement of Glu-234 promotes adenylyltransferase activity. Activation dissociates ATP-binding from Glu-234, allowing ordered binding of the entire ATP moiety with the alpha-phosphate in an orientation that is productive for accepting an incoming target hydroxyl side chain. Protein that can both mediate the addition of adenosine 5'-monophosphate (AMP) to specific residues of target proteins (AMPylation), and the removal of the same modification from target proteins (de-AMPylation), depending on the context. The side chain of Glu-231 determines which of the two opposing activities (AMPylase or de-AMPylase) will take place. Acts as a key regulator of the ERN1/IRE1-mediated unfolded protein response (UPR) by mediating AMPylation or de-AMPylation of HSPA5/BiP. In unstressed cells, acts as an adenylyltransferase by mediating AMPylation of HSPA5/BiP at 'Thr-518', thereby inactivating it. In response to endoplasmic reticulum stress, acts as a phosphodiesterase by mediating removal of ATP (de-AMPylation) from HSPA5/BiP at 'Thr-518', leading to restore HSPA5/BiP activity. Although it is able to AMPylate RhoA, Rac and Cdc42 Rho GTPases in vitro, Rho GTPases do not constitute physiological substrates. The protein is Protein adenylyltransferase FICD of Mus musculus (Mouse).